The chain runs to 100 residues: Defensin-B4 (100 aa).

The first 22 residues, 1 to 22 (MRASLLLFILLVYLAHAPQAQG), serve as a signal peptide directing secretion. The propeptide occupies 23 to 26 (VFGP). Intrachain disulfides connect Cys29-Cys56, Cys36-Cys50, and Cys40-Cys57. Residues 60 to 100 (STGTSSSQGSHEVPVINSEPALESKPEPQDTQEEEATMVSE) form a disordered region. Residues 89 to 100 (DTQEEEATMVSE) are compositionally biased toward acidic residues.

Belongs to the beta-defensin family. In terms of tissue distribution, highly expressed in kidney, lowly expressed in spleen, and expressed at lower levels in lung.

The protein localises to the secreted. Has antimicrobial activity. The protein is Defensin-B4 of Ornithorhynchus anatinus (Duckbill platypus).